A 451-amino-acid chain; its full sequence is AP-4 complex subunit mu (451 aa).

In terms of domain architecture, MHD spans 184–450; it reads REEIFVDIIE…VTQANSYVAR (267 aa).

This sequence belongs to the adaptor complexes medium subunit family. Adaptor protein complex 4 (AP-4) is a heterotetramer composed of two large adaptins (epsilon-type subunit and beta-type subunit), a medium adaptin (mu-type subunit) and a small adaptin (sigma-type subunit).

It is found in the golgi apparatus. Its subcellular location is the trans-Golgi network. The protein resides in the membrane. The protein localises to the coated pit. Subunit of novel type of clathrin- or non-clathrin-associated protein coat involved in targeting proteins from the trans-Golgi network (TGN) to the endosomal-lysosomal system. The polypeptide is AP-4 complex subunit mu (AP4M) (Arabidopsis thaliana (Mouse-ear cress)).